We begin with the raw amino-acid sequence, 84 residues long: Cell division topological specificity factor (84 aa).

This sequence belongs to the MinE family.

In terms of biological role, prevents the cell division inhibition by proteins MinC and MinD at internal division sites while permitting inhibition at polar sites. This ensures cell division at the proper site by restricting the formation of a division septum at the midpoint of the long axis of the cell. This Pseudomonas syringae pv. tomato (strain ATCC BAA-871 / DC3000) protein is Cell division topological specificity factor.